A 127-amino-acid polypeptide reads, in one-letter code: Large ribosomal subunit protein bL17 (127 aa).

This sequence belongs to the bacterial ribosomal protein bL17 family. In terms of assembly, part of the 50S ribosomal subunit. Contacts protein L32.

This chain is Large ribosomal subunit protein bL17, found in Lactobacillus gasseri (strain ATCC 33323 / DSM 20243 / BCRC 14619 / CIP 102991 / JCM 1131 / KCTC 3163 / NCIMB 11718 / NCTC 13722 / AM63).